Here is a 500-residue protein sequence, read N- to C-terminus: Maturase K (500 aa).

Belongs to the intron maturase 2 family. MatK subfamily.

The protein localises to the plastid. It localises to the chloroplast. Functionally, usually encoded in the trnK tRNA gene intron. Probably assists in splicing its own and other chloroplast group II introns. The polypeptide is Maturase K (Fragaria vesca (Woodland strawberry)).